A 273-amino-acid polypeptide reads, in one-letter code: Pantothenate synthetase (273 aa).

Residue M27–H34 participates in ATP binding. Catalysis depends on H34, which acts as the Proton donor. Q58 contacts (R)-pantoate. Q58 lines the beta-alanine pocket. G144–D147 lines the ATP pocket. Q150 is a (R)-pantoate binding site. Residues V173 and L181–R184 each bind ATP.

The protein belongs to the pantothenate synthetase family. As to quaternary structure, homodimer.

The protein resides in the cytoplasm. It carries out the reaction (R)-pantoate + beta-alanine + ATP = (R)-pantothenate + AMP + diphosphate + H(+). The protein operates within cofactor biosynthesis; (R)-pantothenate biosynthesis; (R)-pantothenate from (R)-pantoate and beta-alanine: step 1/1. In terms of biological role, catalyzes the condensation of pantoate with beta-alanine in an ATP-dependent reaction via a pantoyl-adenylate intermediate. This Campylobacter curvus (strain 525.92) protein is Pantothenate synthetase.